The sequence spans 285 residues: Nucleotide-binding protein NTHI1314 (285 aa).

Position 8 to 15 (8 to 15 (GRSGAGKS)) interacts with ATP. 56-59 (DIRN) provides a ligand contact to GTP.

Belongs to the RapZ-like family.

Functionally, displays ATPase and GTPase activities. In Haemophilus influenzae (strain 86-028NP), this protein is Nucleotide-binding protein NTHI1314.